We begin with the raw amino-acid sequence, 260 residues long: Thrombin-like enzyme bhalternin (260 aa).

Positions 1–18 (MVLIRVLANLLILQLSYA) are cleaved as a signal peptide. The propeptide occupies 19–24 (QKASEL). Residues 25–251 (VIGGDECNIN…YSEWIQSIIA (227 aa)) form the Peptidase S1 domain. Cystine bridges form between C31/C165, C50/C66, C144/C212, C176/C191, and C202/C227. N44 carries N-linked (GlcNAc...) asparagine glycosylation. N81 is a glycosylation site (N-linked (GlcNAc...) asparagine).

It belongs to the peptidase S1 family. Snake venom subfamily. As to quaternary structure, monomer. Expressed by the venom gland.

The protein localises to the secreted. Inhibited by benzamidine and partially inhibited by EDTA. Its function is as follows. Thrombin-like snake venom serine protease that induces blood clotting in vitro, defibrinogenation in vivo (by intraperitoneal injection into mice), albuminolytic and fibrinogenolytic activities. Preferentially cleaves the alpha chain of fibrinogen (FGA). Causes hemolysis in the heart, causes apparent hyperemia and lymphocytic interstitial pneumonitis in the lung, causes necrosis and inflammatory infiltrate in the liver, and causes glomerular congestion in the kidney. Also provokes a drastic myonecrosis. This is Thrombin-like enzyme bhalternin from Bothrops alternatus (Urutu).